Consider the following 123-residue polypeptide: Ribosome-binding factor A (123 aa).

Belongs to the RbfA family. Monomer. Binds 30S ribosomal subunits, but not 50S ribosomal subunits or 70S ribosomes.

It localises to the cytoplasm. One of several proteins that assist in the late maturation steps of the functional core of the 30S ribosomal subunit. Associates with free 30S ribosomal subunits (but not with 30S subunits that are part of 70S ribosomes or polysomes). Required for efficient processing of 16S rRNA. May interact with the 5'-terminal helix region of 16S rRNA. The chain is Ribosome-binding factor A from Legionella pneumophila (strain Lens).